A 190-amino-acid chain; its full sequence is E3 ubiquitin-protein ligase RNF4 (190 aa).

Residues 1–16 (MSTRKRRGGAINSRQA) are required for ubiquitination activity. The tract at residues 1–29 (MSTRKRRGGAINSRQAQKRTREATSTPEI) is disordered. The segment at 4–61 (RKRRGGAINSRQAQKRTREATSTPEISLEAEPIELVETAGDEIVDLTCESLEPVVVDL) is mediates interaction with TRPS1. 4 short sequence motifs (SUMO interaction motif) span residues 36-39 (IELV), 46-49 (IVDL), 57-59 (VVV), and 67-70 (VVIV). Residues Ser94 and Ser95 each carry the phosphoserine modification. Zn(2+) contacts are provided by Cys132, Cys135, Cys154, His156, Cys159, Cys162, Cys173, and Cys176. Residues 132-177 (CPICMDGYSEIVQNGRLIVSTECGHVFCSQCLRDSLKNANTCPTCR) form an RING-type zinc finger.

In terms of assembly, homodimer (via RING-type zinc finger domain). Interacts with GSC2. Interacts with AR/the androgen receptor and TBP. Interacts with TCF20. Interacts with PATZ1. Interacts with TRPS1; negatively regulates TRPS1 transcriptional repressor activity. Interacts with PML (isoform PML-1, isoform PML-2, isoform PML-3, isoform PML-4, isoform PML-5 and isoform PML-6). Interacts with PRDM1/Blimp-1. Sumoylated; conjugated by one or two SUMO1 moieties. Post-translationally, autoubiquitinated. As to expression, widely expressed at low levels in many tissues; highly expressed in testis.

The protein localises to the cytoplasm. Its subcellular location is the nucleus. The protein resides in the PML body. It carries out the reaction S-ubiquitinyl-[E2 ubiquitin-conjugating enzyme]-L-cysteine + [acceptor protein]-L-lysine = [E2 ubiquitin-conjugating enzyme]-L-cysteine + N(6)-ubiquitinyl-[acceptor protein]-L-lysine.. It participates in protein modification; protein ubiquitination. E3 ubiquitin-protein ligase which binds polysumoylated chains covalently attached to proteins and mediates 'Lys-6'-, 'Lys-11'-, 'Lys-48'- and 'Lys-63'-linked polyubiquitination of those substrates and their subsequent targeting to the proteasome for degradation. Regulates the degradation of several proteins including PML and the transcriptional activator PEA3. Involved in chromosome alignment and spindle assembly, it regulates the kinetochore CENPH-CENPI-CENPK complex by targeting polysumoylated CENPI to proteasomal degradation. Regulates the cellular responses to hypoxia and heat shock through degradation of respectively EPAS1 and PARP1. Alternatively, it may also bind DNA/nucleosomes and have a more direct role in the regulation of transcription for instance enhancing basal transcription and steroid receptor-mediated transcriptional activation. Catalyzes ubiquitination of sumoylated PARP1 in response to PARP1 trapping to chromatin, leading to PARP1 removal from chromatin by VCP/p97. The sequence is that of E3 ubiquitin-protein ligase RNF4 from Homo sapiens (Human).